The primary structure comprises 723 residues: Fatty acid oxidation complex subunit alpha (723 aa).

Positions 1–189 (MIYQAETLQV…KIGLLDAVVD (189 aa)) are enoyl-CoA hydratase/isomerase. A substrate-binding site is contributed by D296. Residues 311 to 723 (SKDTQRAAVL…FYGAQQQGSI (413 aa)) are 3-hydroxyacyl-CoA dehydrogenase. NAD(+) contacts are provided by residues M325, D344, 401-403 (VVE), K408, and S430. Residue H451 is the For 3-hydroxyacyl-CoA dehydrogenase activity of the active site. N454 serves as a coordination point for NAD(+). Residues N501 and Y661 each contribute to the substrate site.

It in the N-terminal section; belongs to the enoyl-CoA hydratase/isomerase family. The protein in the C-terminal section; belongs to the 3-hydroxyacyl-CoA dehydrogenase family. In terms of assembly, heterotetramer of two alpha chains (FadB) and two beta chains (FadA).

The enzyme catalyses a (3S)-3-hydroxyacyl-CoA + NAD(+) = a 3-oxoacyl-CoA + NADH + H(+). The catalysed reaction is a (3S)-3-hydroxyacyl-CoA = a (2E)-enoyl-CoA + H2O. It catalyses the reaction a 4-saturated-(3S)-3-hydroxyacyl-CoA = a (3E)-enoyl-CoA + H2O. It carries out the reaction (3S)-3-hydroxybutanoyl-CoA = (3R)-3-hydroxybutanoyl-CoA. The enzyme catalyses a (3Z)-enoyl-CoA = a 4-saturated (2E)-enoyl-CoA. The catalysed reaction is a (3E)-enoyl-CoA = a 4-saturated (2E)-enoyl-CoA. It participates in lipid metabolism; fatty acid beta-oxidation. Involved in the aerobic and anaerobic degradation of long-chain fatty acids via beta-oxidation cycle. Catalyzes the formation of 3-oxoacyl-CoA from enoyl-CoA via L-3-hydroxyacyl-CoA. It can also use D-3-hydroxyacyl-CoA and cis-3-enoyl-CoA as substrate. The chain is Fatty acid oxidation complex subunit alpha from Vibrio campbellii (strain ATCC BAA-1116).